A 72-amino-acid polypeptide reads, in one-letter code: High-potential iron-sulfur protein isozyme 1 (72 aa).

At A1 the chain carries N-carbamoylalanine; partial. [4Fe-4S] cluster-binding residues include C34, C37, C51, and C65.

The protein belongs to the high-potential iron-sulfur protein (HiPIP) family. In terms of assembly, homodimer.

Its function is as follows. Specific class of high-redox-potential 4Fe-4S ferredoxins. Functions in anaerobic electron transport in most purple and in some other photosynthetic bacteria and in at least one genus (Paracoccus) of halophilic, denitrifying bacteria. This is High-potential iron-sulfur protein isozyme 1 from Ectothiorhodospira mobilis.